A 371-amino-acid chain; its full sequence is MEPIWAVGLMTGTVLDGNIDVALIKTDGERIDDFGTYRLMPYPQSIRSLLEETLTAARAWNFVGPEPAIFRKAEEALTRAQSAAVKELVEGYGMTMADIGVVGFHGQTVLHRAPQVGRLGQTRQLGDGELMHSLLSTKVAYDFRSADMRAGGQGAPLAAAYHTALMRSAGASGEVAVLNLGGVANITWWDGADNVVAFDTGPANAPLNDFIKSKGLGDMDRDGALGRAGTVDEARLAKLLQHPYLTKPYPKSLDRFDFGAAMADGLNAEDGAALLTAFTAGAVGKALDLLPTRPKKLVVSGGGRHNPTMMAMLASRAGVEVVQAESLGWSGDAVEAECFAFLAVRVLRGMPISFPSTTGAPQPMRGGKLAG.

12 to 20 (GTVLDGNID) contacts ATP.

It belongs to the anhydro-N-acetylmuramic acid kinase family.

The enzyme catalyses 1,6-anhydro-N-acetyl-beta-muramate + ATP + H2O = N-acetyl-D-muramate 6-phosphate + ADP + H(+). Its pathway is amino-sugar metabolism; 1,6-anhydro-N-acetylmuramate degradation. It participates in cell wall biogenesis; peptidoglycan recycling. Its function is as follows. Catalyzes the specific phosphorylation of 1,6-anhydro-N-acetylmuramic acid (anhMurNAc) with the simultaneous cleavage of the 1,6-anhydro ring, generating MurNAc-6-P. Is required for the utilization of anhMurNAc either imported from the medium or derived from its own cell wall murein, and thus plays a role in cell wall recycling. The polypeptide is Anhydro-N-acetylmuramic acid kinase (Mesorhizobium japonicum (strain LMG 29417 / CECT 9101 / MAFF 303099) (Mesorhizobium loti (strain MAFF 303099))).